A 298-amino-acid chain; its full sequence is Nucleotide-binding protein MAV_3359 (298 aa).

ATP is bound at residue 18–25 (GLSGAGRG). Position 69-72 (69-72 (DVRS)) interacts with GTP.

Belongs to the RapZ-like family.

Functionally, displays ATPase and GTPase activities. The sequence is that of Nucleotide-binding protein MAV_3359 from Mycobacterium avium (strain 104).